A 540-amino-acid chain; its full sequence is MIKTTEHIVNNSIERDYSKSISLEHRKKFAQFFTPFPIAYAMAKWILGNKQLKTVLEPAFGLGVFSRAILSQQKEINIKAFEVDETIFENAKEYFDDFENVNILLQDYMYNDWKNKYDGIICNPPYFKFHDYDNKNILKEIETNLKCKLNGFTNLYTLFLLKSIHQLSQNGRCAYIIPSEFLNSDYGKLVKTYLIKSKTLRHIIVIDFEENVFDDALTTASIILCANDNITDKVQFNNIQSLQDLSKIDEIINKYPNFLETEQTYNFSDLNPEIKWKAYYQKQNSIKFKNLVPFSTYAKVVRGIATGSNEYFTFNLSKAKEFNIDEQYLLPCICSAKDAKTSFFTKQDFEELKKSDKSVFLFNAQNSTDKNISSYIQKGESEEINKRFLTASRTPWYSLENRKPAPIWVSVFNRSGLRFIRNEANISNLTSYHCIIQNKQVVSEIDIDLLFAYLLTDTAKQIFEDNSRQYGNGLQKFEPNDLNKGMMLDLGLLDKQTSDEILNLYKEYKYLILDNKNGDEIINKIDKILTDKYSEKKHWA.

The protein belongs to the N(4)/N(6)-methyltransferase family. In terms of assembly, monomer.

The catalysed reaction is a 2'-deoxyadenosine in DNA + S-adenosyl-L-methionine = an N(6)-methyl-2'-deoxyadenosine in DNA + S-adenosyl-L-homocysteine + H(+). Its function is as follows. A gamma subtype methylase, recognizes the double-stranded sequence 5'-GTMKAC-3', methylates A-5 on both strands, and protects the DNA from cleavage by the AccI endonuclease. The chain is Type II methyltransferase M.AccI (accIM) from Acinetobacter calcoaceticus.